Reading from the N-terminus, the 297-residue chain is Mitochondrial substrate carrier family protein P (297 aa).

Solcar repeat units lie at residues 12–98, 104–189, and 201–293; these read KPSW…IKNH, SSSF…LKRI, and ISGT…LSNF. 6 helical membrane-spanning segments follow: residues 15–35, 66–86, 107–127, 165–185, 207–227, and 262–282; these read WVSF…VAPL, GIKG…PYAA, FQIF…TYPL, IQPT…TFEF, LIAG…FDVV, and ILAL…TASI.

The protein belongs to the mitochondrial carrier (TC 2.A.29) family.

It is found in the mitochondrion inner membrane. Functionally, mitochondrial solute carriers shuttle metabolites, nucleotides, and cofactors through the mitochondrial inner membrane. Required for the accumulation of coenzyme A in the mitochondrial matrix. This chain is Mitochondrial substrate carrier family protein P (mcfP), found in Dictyostelium discoideum (Social amoeba).